The primary structure comprises 126 residues: Small ribosomal subunit protein uS13c (126 aa).

The tract at residues 100–126 (GQRTRTNARTRRGARQTVAGKKKAPSK) is disordered. The segment covering 101–126 (QRTRTNARTRRGARQTVAGKKKAPSK) has biased composition (basic residues).

This sequence belongs to the universal ribosomal protein uS13 family. In terms of assembly, part of the 30S ribosomal subunit.

Its subcellular location is the plastid. The protein resides in the cyanelle. In terms of biological role, located at the top of the head of the 30S subunit, it contacts several helices of the 16S rRNA. This Cyanophora paradoxa protein is Small ribosomal subunit protein uS13c.